We begin with the raw amino-acid sequence, 419 residues long: UPF0242 protein TC_0906 (419 aa).

This sequence belongs to the UPF0242 family.

In Chlamydia muridarum (strain MoPn / Nigg), this protein is UPF0242 protein TC_0906.